A 204-amino-acid chain; its full sequence is Holliday junction branch migration complex subunit RuvA (204 aa).

Positions 1–64 are domain I; it reads MIGKLKGTLE…EEAIRLFGFA (64 aa). Residues 65–143 are domain II; the sequence is TRAEQEWFCM…PFEQAVKTVS (79 aa). Positions 144–154 are flexible linker; sequence VPQREITHQPA. The tract at residues 154 to 204 is domain III; the sequence is AHDALSALMKLGFEREQAARALALAMNALEGEAVSSALLIRHSLKLLSSPT.

It belongs to the RuvA family. In terms of assembly, homotetramer. Forms an RuvA(8)-RuvB(12)-Holliday junction (HJ) complex. HJ DNA is sandwiched between 2 RuvA tetramers; dsDNA enters through RuvA and exits via RuvB. An RuvB hexamer assembles on each DNA strand where it exits the tetramer. Each RuvB hexamer is contacted by two RuvA subunits (via domain III) on 2 adjacent RuvB subunits; this complex drives branch migration. In the full resolvosome a probable DNA-RuvA(4)-RuvB(12)-RuvC(2) complex forms which resolves the HJ.

The protein resides in the cytoplasm. Functionally, the RuvA-RuvB-RuvC complex processes Holliday junction (HJ) DNA during genetic recombination and DNA repair, while the RuvA-RuvB complex plays an important role in the rescue of blocked DNA replication forks via replication fork reversal (RFR). RuvA specifically binds to HJ cruciform DNA, conferring on it an open structure. The RuvB hexamer acts as an ATP-dependent pump, pulling dsDNA into and through the RuvAB complex. HJ branch migration allows RuvC to scan DNA until it finds its consensus sequence, where it cleaves and resolves the cruciform DNA. The polypeptide is Holliday junction branch migration complex subunit RuvA (Bartonella tribocorum (strain CIP 105476 / IBS 506)).